Consider the following 410-residue polypeptide: Enterobactin exporter EntS (410 aa).

Topologically, residues 1–21 (MNKQSWLLNLSLLKTHPAFRA) are cytoplasmic. The helical transmembrane segment at 22–42 (VFLARFISIVSLGLLGVAVPV) threads the bilayer. Over 43–55 (QIQMMTHSTWQVG) the chain is Periplasmic. A helical transmembrane segment spans residues 56–76 (LSVTLTGGAMFVGLMVGGVLA). The Cytoplasmic segment spans residues 77–83 (DRYERKK). The chain crosses the membrane as a helical span at residues 84–104 (VILLARGTCGIGFIGLCLNAL). The Periplasmic segment spans residues 105–109 (LPEPS). A helical membrane pass occupies residues 110–130 (LLAIYLLGLWDGFFASLGVTA). Residues 131-156 (LLAATSALVGRENLMQAGAITMLTVR) lie on the Cytoplasmic side of the membrane. The helical transmembrane segment at 157 to 177 (LGSVISPMIGGLLLATGGVAW) threads the bilayer. Asn178 is a topological domain (periplasmic). A helical membrane pass occupies residues 179–199 (YGLAAAGTFITLLPLLSLPEL). Over 200–218 (PPPPQPLEHPLKSLLAGFR) the chain is Cytoplasmic. Residues 219–233 (FLLASPLLGGLLTMA) traverse the membrane as a helical segment. Residues 234-250 (SAVLVLYPALADNWQMS) lie on the Periplasmic side of the membrane. Residues 251–271 (AAQIGFLYAAIPLGAAIGALT) traverse the membrane as a helical segment. Residues 272 to 281 (SGKLAHSARP) lie on the Cytoplasmic side of the membrane. A helical membrane pass occupies residues 282-301 (GLLMLLSTLGSFLAIGLFGL). The Periplasmic portion of the chain corresponds to 302–307 (MPMWIL). Residues 308 to 330 (GVVCLALFGWLSAVSSLLQYTML) form a helical membrane-spanning segment. The Cytoplasmic portion of the chain corresponds to 331 to 350 (QTQTPEAMLGRINGLWTAQN). A helical membrane pass occupies residues 351 to 371 (VTGDAIGAALLGGLGAMMTPV). Position 372 (Ala372) is a topological domain, periplasmic. Residues 373–393 (SASASGFGLLIIGVLLLLVLV) traverse the membrane as a helical segment. The Cytoplasmic portion of the chain corresponds to 394-410 (ELRRFRQTPPQVTASDS).

This sequence belongs to the major facilitator superfamily. EntS (TC 2.A.1.38) family.

The protein localises to the cell inner membrane. In terms of biological role, component of an export pathway for enterobactin. In Shigella flexneri, this protein is Enterobactin exporter EntS.